A 510-amino-acid polypeptide reads, in one-letter code: NAD(P)H-quinone oxidoreductase subunit 2 A, chloroplastic (510 aa).

Transmembrane regions (helical) follow at residues 31–51, 59–79, 99–119, 124–144, 149–169, 183–203, 229–249, 295–315, 323–343, 354–374, 395–415, and 418–438; these read FIFP…IDLT, WFYF…LFRW, IFQF…VEYI, MAIT…MFLC, LITI…LSGY, YLLM…WLYG, ISIA…PAPF, WHLL…LLAI, MLAY…IVGD, YMLF…LFGL, ALSL…AGFF, and LYLF…IGLL.

This sequence belongs to the complex I subunit 2 family. NDH is composed of at least 16 different subunits, 5 of which are encoded in the nucleus.

Its subcellular location is the plastid. The protein localises to the chloroplast thylakoid membrane. The catalysed reaction is a plastoquinone + NADH + (n+1) H(+)(in) = a plastoquinol + NAD(+) + n H(+)(out). The enzyme catalyses a plastoquinone + NADPH + (n+1) H(+)(in) = a plastoquinol + NADP(+) + n H(+)(out). In terms of biological role, NDH shuttles electrons from NAD(P)H:plastoquinone, via FMN and iron-sulfur (Fe-S) centers, to quinones in the photosynthetic chain and possibly in a chloroplast respiratory chain. The immediate electron acceptor for the enzyme in this species is believed to be plastoquinone. Couples the redox reaction to proton translocation, and thus conserves the redox energy in a proton gradient. The polypeptide is NAD(P)H-quinone oxidoreductase subunit 2 A, chloroplastic (Oryza nivara (Indian wild rice)).